A 105-amino-acid chain; its full sequence is NADH-quinone oxidoreductase subunit K (105 aa).

A run of 3 helical transmembrane segments spans residues 8-28 (VTNGLIFSTLLFVISVAGIII), 33-53 (ILILLMSIELMLLAVNTNFLI), and 65-85 (VFVFFIMAVAAAETAIGLAIV).

The protein belongs to the complex I subunit 4L family. As to quaternary structure, NDH-1 is composed of 14 different subunits. Subunits NuoA, H, J, K, L, M, N constitute the membrane sector of the complex.

It localises to the cell inner membrane. The catalysed reaction is a quinone + NADH + 5 H(+)(in) = a quinol + NAD(+) + 4 H(+)(out). Functionally, NDH-1 shuttles electrons from NADH, via FMN and iron-sulfur (Fe-S) centers, to quinones in the respiratory chain. The immediate electron acceptor for the enzyme in this species is believed to be ubiquinone. Couples the redox reaction to proton translocation (for every two electrons transferred, four hydrogen ions are translocated across the cytoplasmic membrane), and thus conserves the redox energy in a proton gradient. The polypeptide is NADH-quinone oxidoreductase subunit K (Francisella philomiragia subsp. philomiragia (strain ATCC 25017 / CCUG 19701 / FSC 153 / O#319-036)).